We begin with the raw amino-acid sequence, 212 residues long: 3-isopropylmalate dehydratase small subunit (212 aa).

It belongs to the LeuD family. LeuD type 1 subfamily. Heterodimer of LeuC and LeuD.

It catalyses the reaction (2R,3S)-3-isopropylmalate = (2S)-2-isopropylmalate. Its pathway is amino-acid biosynthesis; L-leucine biosynthesis; L-leucine from 3-methyl-2-oxobutanoate: step 2/4. In terms of biological role, catalyzes the isomerization between 2-isopropylmalate and 3-isopropylmalate, via the formation of 2-isopropylmaleate. This chain is 3-isopropylmalate dehydratase small subunit, found in Dechloromonas aromatica (strain RCB).